The primary structure comprises 111 residues: Prothymosin alpha (111 aa).

An N-acetylmethionine modification is found at M1. The interval 1–111 is disordered; it reads MSDAAVDTSS…TKKQKTDEDD (111 aa). N-acetylserine; in Prothymosin alpha, N-terminally processed is present on S2. S2 carries the phosphoserine modification. Position 8 is a phosphothreonine (T8). A phosphoserine mark is found at S9 and S10. Residues T13 and T14 each carry the phosphothreonine modification. The span at 13–31 shows a compositional bias: basic and acidic residues; sequence TTKDLKEKKEVVEEAENGR. Residue K15 is modified to N6-acetyllysine; alternate. Position 15 is an N6-succinyllysine; alternate (K15). Residues 40 to 84 are compositionally biased toward acidic residues; that stretch reads ENEENGEQEADNEVDEEEEEGGEEEEEEEEGDGEEEDGDEDEEAE. Basic and acidic residues predominate over residues 101-111; the sequence is DTKKQKTDEDD. T102 carries the post-translational modification Phosphothreonine. N6-acetyllysine; alternate is present on K103. Residue K103 forms a Glycyl lysine isopeptide (Lys-Gly) (interchain with G-Cter in SUMO2); alternate linkage. Phosphothreonine is present on T107.

Belongs to the pro/parathymosin family. In terms of assembly, interacts with NUPR1; regulates apoptotic process. Covalently linked to a small RNA of about 20 nucleotides.

The protein resides in the nucleus. In terms of biological role, prothymosin alpha may mediate immune function by conferring resistance to certain opportunistic infections. The protein is Prothymosin alpha (PTMA) of Homo sapiens (Human).